The chain runs to 6919 residues: Nonribosomal peptide synthetase easA (6919 aa).

Positions 17–93 (TNNEVVEKDI…ELCQSVKLAE (77 aa)) constitute a Carrier 1 domain. The residue at position 54 (S54) is an O-(pantetheine 4'-phosphoryl)serine. Positions 123 to 427 (EAQKLYASTK…FLRKVKDTRM (305 aa)) are epimerization 1. The tract at residues 294 to 319 (FRRSTPVESTNDERNTNERQHNRHQN) is disordered. The segment covering 304-319 (NDERNTNERQHNRHQN) has biased composition (basic and acidic residues). The interval 604-981 (LNVELDCGRL…ISTTQEINQL (378 aa)) is condensation 1. The adenylation 1 stretch occupies residues 1003–1394 (QRLRRPDAWA…GRRDTQIKVR (392 aa)). The region spanning 1531-1608 (EPETLLERQV…QLAQTAEVKD (78 aa)) is the Carrier 2 domain. An O-(pantetheine 4'-phosphoryl)serine modification is found at S1569. The epimerization 2 stretch occupies residues 1617–2031 (LLSPMQKWYF…ANAISALGTE (415 aa)). Positions 2072-2509 (VEDIYPCSPI…VGQLNTVTPK (438 aa)) are condensation 2. Residues 2541–2930 (RPNATAVCAW…ARKDSQVKVR (390 aa)) form an adenylation 2 region. The 77-residue stretch at 3067–3143 (APSTFMEKKL…EMAAHLEAQM (77 aa)) folds into the Carrier 3 domain. S3104 is modified (O-(pantetheine 4'-phosphoryl)serine). The segment at 3188 to 3599 (EDVYPCTPLQ…LLSKDEARRL (412 aa)) is condensation 3. An adenylation 3 region spans residues 3620-4018 (QHVSTNPYAP…GRRDGQVKIR (399 aa)). The region spanning 4151–4228 (TPSTSEEKNI…QLAKKAVIKT (78 aa)) is the Carrier 4 domain. S4188 bears the O-(pantetheine 4'-phosphoryl)serine mark. The condensation 4 stretch occupies residues 4282-4708 (ESIYYCSPIQ…EIDVIPTGDV (427 aa)). Residues 4732–5133 (EQALSQPGAQ…GRADGQIKIR (402 aa)) form an adenylation 4 region. Residues 5260–5337 (ALSTETERRL…DMANTIANSE (78 aa)) form the Carrier 5 domain. S5296 carries the post-translational modification O-(pantetheine 4'-phosphoryl)serine. Positions 5380-5775 (EDAYPCTPLQ…VFGQLQSAAN (396 aa)) are condensation 5. The segment at 5824–6216 (SCPDAQAVHA…IGRRDTQVKI (393 aa)) is adenylation 5. The 78-residue stretch at 6344–6421 (EPATVTERLL…DMATLIDRKT (78 aa)) folds into the Carrier 6 domain. At S6381 the chain carries O-(pantetheine 4'-phosphoryl)serine.

Its pathway is antibiotic biosynthesis. Nonribosomal peptide synthetase; part of the gene cluster that mediates the biosynthesis of emericellamides, secondary metabolites acting as antibiotics. The biosynthesis of emericellamides initiates from the highly reducing polyketide synthase easB which catalyzes the formation of the linear polyketide chain. EasB produces several polyketides that can be further processed by the downstream enzymes. The polyketides are released from easB as linear polyketide carboxylic acids, which are converted to CoA thioesters by the acyl-CoA ligase easD. The substrates are then loaded onto the acyltransferase easC, which shuttles them to the first thiolation (T) domain of the nonribosomal peptide synthetase easA. EasA then performs condensation of the polyketides with one glycine, two alanine, one valine and one leucine residues. A last step of cyclization leads to the production of emericellamides. This is Nonribosomal peptide synthetase easA from Emericella nidulans (strain FGSC A4 / ATCC 38163 / CBS 112.46 / NRRL 194 / M139) (Aspergillus nidulans).